Here is a 208-residue protein sequence, read N- to C-terminus: UPF0301 protein MAB_4928c (208 aa).

This sequence belongs to the UPF0301 (AlgH) family.

The polypeptide is UPF0301 protein MAB_4928c (Mycobacteroides abscessus (strain ATCC 19977 / DSM 44196 / CCUG 20993 / CIP 104536 / JCM 13569 / NCTC 13031 / TMC 1543 / L948) (Mycobacterium abscessus)).